The following is a 720-amino-acid chain: IKIVVERDPIKTSFEKWAKPGHFSKTLAKGPNTTTWIWNLHADAHDFDSHTNDLEEISRKVFSAHFGQLAIIFIWLSGMYFHGARFSNYEAWLGDPTHIKPSAQVVWPIVGQEILNGDVGGGFRGIQITSGFFQIWRASGITSELQLYCTAIGALIFAALMLFAGWFHYHKAAPKLAWFQDVESMLNHHLAGLLGLGSLSWAGHQIHVSLPINELLDAGVDPKEIPLPHEFILNRELLAQLYPSFAKGLTPFFTLNWSEYSEFLTFRGGLNPVTGGLWLTDTAHHHLAIAILFLIAGHMYRTNWSIGHNLKEILEAHKGPFTGEGHRGLYEILTTSWHAQLALNLAMLGSLTIVVAHHMYSMPPYPYLATDYGTQLSLFTHHMWIGGFLIVGAAAHAAIFMVRDYDPTTQYNNLLDRVLRHRDAIVSHLNWACIFLGFHSFGLYIHNDTMSALGRPKDMFSDTAIQLQPIFAQWIQNTHALAPSLTAPDATASTSLTWGGGDLVAVGAKVALLPIPLGTADFLVHHIHAFTIHVTVLILLKGVLFARSSRLIPDKVNLGFRFPCDGPGRGGTCQVSAWDHVFLGLFWMYNAISVVIFHFSWKMQSDVWGSISDQGVVTHITGGNFAQSSITINGWLRDFLWAQASQVIQSYGSSLSAYGLLFLGAHFVWAFSLMFLFSGRGYWQELIESIVWAHNKLKVAPAIQPRALSIVQGRAVGVAH.

The next 8 membrane-spanning stretches (helical) occupy residues 61-84, 147-170, 186-210, 282-300, 337-360, 376-402, 424-446, and 522-540; these read VFSAHFGQLAIIFIWLSGMYFHGA, LYCTAIGALIFAALMLFAGWFHYH, LNHHLAGLLGLGSLSWAGHQIHVSL, TAHHHLAIAILFLIAGHMY, WHAQLALNLAMLGSLTIVVAHHMY, LSLFTHHMWIGGFLIVGAAAHAAIFMV, AIVSHLNWACIFLGFHSFGLYIH, and FLVHHIHAFTIHVTVLILL. Residues C564 and C573 each coordinate [4Fe-4S] cluster. 2 consecutive transmembrane segments (helical) span residues 580-601 and 655-677; these read HVFLGLFWMYNAISVVIFHFSW and LSAYGLLFLGAHFVWAFSLMFLF. H666 contributes to the chlorophyll a' binding site. 2 residues coordinate chlorophyll a: M674 and Y682. W683 serves as a coordination point for phylloquinone. A helical membrane pass occupies residues 715–720; that stretch reads AVGVAH.

This sequence belongs to the PsaA/PsaB family. The PsaA/B heterodimer binds the P700 chlorophyll special pair and subsequent electron acceptors. PSI consists of a core antenna complex that captures photons, and an electron transfer chain that converts photonic excitation into a charge separation. The eukaryotic PSI reaction center is composed of at least 11 subunits. P700 is a chlorophyll a/chlorophyll a' dimer, A0 is one or more chlorophyll a, A1 is one or both phylloquinones and FX is a shared 4Fe-4S iron-sulfur center. is required as a cofactor.

The protein localises to the plastid. It localises to the chloroplast thylakoid membrane. The catalysed reaction is reduced [plastocyanin] + hnu + oxidized [2Fe-2S]-[ferredoxin] = oxidized [plastocyanin] + reduced [2Fe-2S]-[ferredoxin]. Its function is as follows. PsaA and PsaB bind P700, the primary electron donor of photosystem I (PSI), as well as the electron acceptors A0, A1 and FX. PSI is a plastocyanin-ferredoxin oxidoreductase, converting photonic excitation into a charge separation, which transfers an electron from the donor P700 chlorophyll pair to the spectroscopically characterized acceptors A0, A1, FX, FA and FB in turn. Oxidized P700 is reduced on the lumenal side of the thylakoid membrane by plastocyanin. The chain is Photosystem I P700 chlorophyll a apoprotein A1 from Sequoia sempervirens (California redwood).